Here is a 236-residue protein sequence, read N- to C-terminus: Small ribosomal subunit protein uS3 (236 aa).

A KH type-2 domain is found at 39 to 107 (IRLYVLEELK…ETSLNIVEIH (69 aa)). Residues 216–236 (ERRAAEVDHSGSSSNRRRENA) are disordered.

The protein belongs to the universal ribosomal protein uS3 family. As to quaternary structure, part of the 30S ribosomal subunit. Forms a tight complex with proteins S10 and S14.

Functionally, binds the lower part of the 30S subunit head. Binds mRNA in the 70S ribosome, positioning it for translation. The polypeptide is Small ribosomal subunit protein uS3 (Bartonella henselae (strain ATCC 49882 / DSM 28221 / CCUG 30454 / Houston 1) (Rochalimaea henselae)).